A 283-amino-acid chain; its full sequence is Movement protein (283 aa).

It belongs to the tenuiviruses pc4 protein family.

In terms of biological role, transports viral genome to neighboring plant cells directly through plasmosdesmata, without any budding. The movement protein allows efficient cell to cell propagation, by bypassing the host cell wall barrier. The sequence is that of Movement protein from Maize stripe virus (MStV).